The sequence spans 253 residues: MAAVQIDDYGPWTTEPAPRRETDLQALQARLFADVADFLGGRDGYAFAGRFDNMVGAATGIAPAAFERLQERIRNRYPVTVSVGIGTARTPADALDAAGTALRDAGSAQDENRQEALSHRSPPGFAGTPGAVTIAHFDVVDATGTYTDTVSPVRAGTEIQGAVTTLAEYLYDTHDAVTQFVGGDNAIAVCPEIDAGIVDDATAHVREAAGVDFQVGVGHGDTPHDAGADAKHALETCRATGARVHGPWTTADD.

Positions Leu102–Phe125 are disordered.

Belongs to the archaeal-type GTP cyclohydrolase family.

It carries out the reaction GTP + 3 H2O = 2-amino-5-formylamino-6-(5-phospho-D-ribosylamino)pyrimidin-4(3H)-one + 2 phosphate + 2 H(+). Catalyzes the formation of 2-amino-5-formylamino-6-ribofuranosylamino-4(3H)-pyrimidinone ribonucleotide monophosphate and inorganic phosphate from GTP. Also has an independent pyrophosphate phosphohydrolase activity. The protein is GTP cyclohydrolase III 2 (gch32) of Halobacterium salinarum (strain ATCC 700922 / JCM 11081 / NRC-1) (Halobacterium halobium).